Here is a 745-residue protein sequence, read N- to C-terminus: uncharacterized protein (745 aa).

An HTH araC/xylS-type domain is found at 158–256; the sequence is NQVCDYIELH…HQTPKQYRGD (99 aa). DNA-binding regions (H-T-H motif) lie at residues 175–196 and 223–246; these read SELSEYVGWSESHLSKKFTESL and ITDIALQNGFSSAASFARTFKHFT.

This is an uncharacterized protein from Staphylococcus aureus (strain COL).